The following is a 312-amino-acid chain: Acetylglutamate kinase (312 aa).

Residues glycine 77–glycine 78, arginine 99, and asparagine 192 each bind substrate.

It belongs to the acetylglutamate kinase family. ArgB subfamily.

The protein resides in the cytoplasm. It catalyses the reaction N-acetyl-L-glutamate + ATP = N-acetyl-L-glutamyl 5-phosphate + ADP. It functions in the pathway amino-acid biosynthesis; L-arginine biosynthesis; N(2)-acetyl-L-ornithine from L-glutamate: step 2/4. In terms of biological role, catalyzes the ATP-dependent phosphorylation of N-acetyl-L-glutamate. The polypeptide is Acetylglutamate kinase (Synechococcus sp. (strain JA-2-3B'a(2-13)) (Cyanobacteria bacterium Yellowstone B-Prime)).